The following is a 144-amino-acid chain: Ribosome maturation factor RimP (144 aa).

This sequence belongs to the RimP family.

It localises to the cytoplasm. Functionally, required for maturation of 30S ribosomal subunits. The chain is Ribosome maturation factor RimP from Azoarcus sp. (strain BH72).